A 661-amino-acid polypeptide reads, in one-letter code: Kyphoscoliosis peptidase (661 aa).

A disordered region spans residues 116 to 137 (GDKNGNMRPRQPGGKDAHAYPW). Catalysis depends on residues Cys225, His267, and Asp282.

Belongs to the transglutaminase-like superfamily. As to quaternary structure, interacts with IGFN1 and FLNC. Specifically expressed in skeletal and cardiac muscle.

It localises to the cytoplasm. The protein resides in the cytoskeleton. It is found in the myofibril. Its subcellular location is the sarcomere. The protein localises to the z line. In terms of biological role, probable cytoskeleton-associated protease required for normal muscle growth. Involved in function, maturation and stabilization of the neuromuscular junction. May act by cleaving muscle-specific proteins such as FLNC. The sequence is that of Kyphoscoliosis peptidase from Mus musculus (Mouse).